The following is a 574-amino-acid chain: MAQVAANGARQPLLQLLRGPSGKLWEVCIGLEVHAQVLSRSKLMSGSAASTLSSARPNRNVSFFDAALPGTLPVINRECVHQAIRMGLAVDATVHPRSLFERKHYFYCDLPLGYQLTQQRAPVASGGALHFELPESAVVSEHGGAHSDEATFDASKYKSRKEKNEALKKWKAKQAKKQQDVISRSVRITRIQIEQDSGKSNHDLEDDSTVVDLNRAGTALLEIVMEPDLRSPVEAGQVMRQLQHLLRHLDVCDGNMEEGSMRCDLNVSVRPTNLGAEADVESLHNALTARTAAPFGERVEVKNMNSIRNMMRAAEYEARRQIALIEEEGGEVHRETRSFDAVTGETKRMRSKEGAKDYRFFPEPDLPPLVFSEKLIQEISERMPELPEALKERLCAQYDLTSYESLVLVNEPGAAPYFETVAAQNSRPSKVVVNWVLNDLFGHLKAVNGDIASSPVTATELGALIDLIQDGTISGKIAKDVLELMFYENEPKKTPLQIVEEKGWKQIQDPEEIRALCRAVLDDPKAKKNLDAYWKGKTQLFGFFIGQVMKQCGGRVHPELANSIMQEILEEHKQ.

It belongs to the GatB/GatE family. GatB subfamily. Subunit of the heterotrimeric GatCAB amidotransferase (AdT) complex, composed of A, B and C subunits.

It is found in the mitochondrion. It carries out the reaction L-glutamyl-tRNA(Gln) + L-glutamine + ATP + H2O = L-glutaminyl-tRNA(Gln) + L-glutamate + ADP + phosphate + H(+). Functionally, allows the formation of correctly charged Gln-tRNA(Gln) through the transamidation of misacylated Glu-tRNA(Gln) in the mitochondria. The reaction takes place in the presence of glutamine and ATP through an activated gamma-phospho-Glu-tRNA(Gln). The protein is Glutamyl-tRNA(Gln) amidotransferase subunit B, mitochondrial of Phytophthora infestans (strain T30-4) (Potato late blight agent).